The sequence spans 439 residues: Probable E3 ubiquitin-protein ligase makorin-1 (439 aa).

3 consecutive C3H1-type zinc fingers follow at residues 18-45 (WTKHVTCRYFMHGLCKEGENCRYSHDLS), 48-74 (KQTMICKFFQKGCCAFGDRCRYEHTKP), and 163-190 (EMKKQLCPYAAVGECRYGLNCAYLHGDV). A disordered region spans residues 73 to 118 (KPSKQDEVPSSKPSMPLTAAPLAGTPEPVSDGPGGTTGAQEKPQGS). The interval 191–218 (CDMCGLQVLHPSDTSQRSQHIRACIEAH) is makorin-type Cys-His. The segment at 236–290 (CGVCMEVVFEKTNPSERRFGILSNCCHCYCLKCIRKWRSAKQFESKIIKSCPECR) adopts an RING-type zinc-finger fold. The segment at 319–348 (GMGTKPCRYFDEGRGTCPFGANCFYKHAFP) adopts a C3H1-type 4 zinc-finger fold. The disordered stretch occupies residues 352–371 (LEEPQPQRRQNGSNGRNRNT). Over residues 358–368 (QRRQNGSNGRN) the composition is skewed to low complexity.

The catalysed reaction is S-ubiquitinyl-[E2 ubiquitin-conjugating enzyme]-L-cysteine + [acceptor protein]-L-lysine = [E2 ubiquitin-conjugating enzyme]-L-cysteine + N(6)-ubiquitinyl-[acceptor protein]-L-lysine.. The protein operates within protein modification; protein ubiquitination. Functionally, E3 ubiquitin ligase catalyzing the covalent attachment of ubiquitin moieties onto substrate proteins. This chain is Probable E3 ubiquitin-protein ligase makorin-1, found in Danio rerio (Zebrafish).